A 101-amino-acid chain; its full sequence is Small ribosomal subunit protein uS14 (101 aa).

Belongs to the universal ribosomal protein uS14 family. As to quaternary structure, part of the 30S ribosomal subunit. Contacts proteins S3 and S10.

In terms of biological role, binds 16S rRNA, required for the assembly of 30S particles and may also be responsible for determining the conformation of the 16S rRNA at the A site. The polypeptide is Small ribosomal subunit protein uS14 (Erythrobacter litoralis (strain HTCC2594)).